We begin with the raw amino-acid sequence, 243 residues long: uncharacterized protein (243 aa).

This is an uncharacterized protein from Methanocaldococcus jannaschii (strain ATCC 43067 / DSM 2661 / JAL-1 / JCM 10045 / NBRC 100440) (Methanococcus jannaschii).